The following is a 534-amino-acid chain: Flavonoid-6-hydroxylase (534 aa).

The helical transmembrane segment at 3 to 23 (FISFVYTLIAFSSLLYFYLIW) threads the bilayer. Residue cysteine 467 participates in heme binding.

It belongs to the cytochrome P450 family. Heme is required as a cofactor. Expressed in leaves.

Its subcellular location is the membrane. It carries out the reaction genkwanin + reduced [NADPH--hemoprotein reductase] + O2 = scutellarein 7-methyl ether + oxidized [NADPH--hemoprotein reductase] + H2O. It catalyses the reaction (2S)-sakuranetin + reduced [NADPH--hemoprotein reductase] + O2 = (2S)-7-methylcarthamidin + oxidized [NADPH--hemoprotein reductase] + H2O + H(+). The enzyme catalyses apigenin 4',7-dimethyl ether + reduced [NADPH--hemoprotein reductase] + O2 = ladanein + oxidized [NADPH--hemoprotein reductase] + H2O + H(+). The catalysed reaction is (2S)-naringenin 4',7-dimethyl ether + reduced [NADPH--hemoprotein reductase] + O2 = (2S)-carthamidin-4',7-dimethyl ether + oxidized [NADPH--hemoprotein reductase] + H2O + H(+). The protein operates within flavonoid metabolism. Hydroxylase involved in the biosynthesis of polymethoxylated flavonoids natural products such as nevadensin and salvigenin, aroma compounds which contribute to the flavor of sweet basil, and exhibit pharmacological activities such as anti-allergic, anti-oxidant, antibacterial, anti-proliferative, and anti-inflammatory effects. Catalyzes the 6-hydroxylation of 7-O-methylated precursors such as the conversion of genkwanin (GENK) to scutellarein-7-methyl ether (SCU7Me). Can also use, with a lower efficiency, apigenin-7,4'-dimethyl ether (AdM), naringenin-7-methyl ether (SAK) and naringenin-7,4'-dimethyl ether (NdM) as substrates. The protein is Flavonoid-6-hydroxylase of Ocimum basilicum (Sweet basil).